A 110-amino-acid chain; its full sequence is Iron-sulfur cluster assembly protein CyaY (110 aa).

The protein belongs to the frataxin family.

Involved in iron-sulfur (Fe-S) cluster assembly. May act as a regulator of Fe-S biogenesis. This Azotobacter vinelandii (strain DJ / ATCC BAA-1303) protein is Iron-sulfur cluster assembly protein CyaY.